Consider the following 110-residue polypeptide: MSQGVEFNRLMLDMRAMQADAMSLPKVTAAPELAPGQSTFADMLGQAIGKVHETQQASTQLANAFEIGKSGVDLTDVMIASQKASVSMQAMTQVRNKLVQAYQDIMQMPV.

It belongs to the FliE family.

It is found in the bacterial flagellum basal body. The polypeptide is Flagellar hook-basal body complex protein FliE (Pseudomonas putida (strain GB-1)).